Reading from the N-terminus, the 205-residue chain is Probable GTP-binding protein EngB (205 aa).

Positions 22–195 (NLPEVALVGR…LDLLDYFWNG (174 aa)) constitute an EngB-type G domain. Residues 30-37 (GRSNVGKS), 57-61 (GKTQT), 75-78 (DLPG), 142-145 (TKAD), and 174-176 (FSA) contribute to the GTP site. 2 residues coordinate Mg(2+): Ser-37 and Thr-59.

The protein belongs to the TRAFAC class TrmE-Era-EngA-EngB-Septin-like GTPase superfamily. EngB GTPase family. Requires Mg(2+) as cofactor.

Functionally, necessary for normal cell division and for the maintenance of normal septation. The polypeptide is Probable GTP-binding protein EngB (Heliobacterium modesticaldum (strain ATCC 51547 / Ice1)).